The chain runs to 487 residues: Nitrate reductase beta chain (487 aa).

3 4Fe-4S ferredoxin-type domains span residues 7–36, 172–203, and 205–234; these read IGMVMNLDKCIGCHTCSVTCKNTWTNRSGA, VFMMYLPRICEHCINPACVSSCPSGAMYKREE, and GIVLVDQNACRSWRYCVSSCPYKKVYFNWQ. Residues Cys16, Cys19, Cys22, Cys26, Cys181, Cys184, and Cys189 each contribute to the [4Fe-4S] cluster site. Cys193, Cys214, and Cys220 together coordinate [3Fe-4S] cluster. [4Fe-4S] cluster contacts are provided by Cys224, Cys241, Cys244, Cys256, and Cys260.

The cofactor is [4Fe-4S] cluster. Requires [3Fe-4S] cluster as cofactor.

It localises to the cell membrane. It carries out the reaction nitrate + a quinol = a quinone + nitrite + H2O. Its function is as follows. The beta chain is an electron transfer unit containing four cysteine clusters involved in the formation of iron-sulfur centers. Electrons are transferred from the gamma chain to the molybdenum cofactor of the alpha subunit. The polypeptide is Nitrate reductase beta chain (narH) (Bacillus subtilis (strain 168)).